The chain runs to 229 residues: Heptaprenylglyceryl phosphate synthase (229 aa).

Residue Lys-12 participates in sn-glycerol 1-phosphate binding. The Mg(2+) site is built by Asp-14 and Ser-40. Sn-glycerol 1-phosphate contacts are provided by residues 159–164 (YLEYSG), Gly-189, and 209–210 (GN).

Belongs to the GGGP/HepGP synthase family. Group I subfamily. Homodimer. Requires Mg(2+) as cofactor.

The catalysed reaction is sn-glycerol 1-phosphate + all-trans-heptaprenyl diphosphate = 3-heptaprenyl-sn-glycero-1-phosphate + diphosphate. The protein operates within membrane lipid metabolism; glycerophospholipid metabolism. Functionally, prenyltransferase that catalyzes in vivo the transfer of the heptaprenyl moiety of heptaprenyl pyrophosphate (HepPP; 35 carbon atoms) to the C3 hydroxyl of sn-glycerol-1-phosphate (G1P), producing heptaprenylglyceryl phosphate (HepGP). This reaction is an ether-bond-formation step in the biosynthesis of archaea-type G1P-based membrane lipids found in Bacillales. The sequence is that of Heptaprenylglyceryl phosphate synthase from Bacillus cereus (strain ZK / E33L).